The sequence spans 90 residues: Protein S100-A6 (90 aa).

EF-hand domains lie at 12-47 and 48-83; these read LVAI…IGAK and LQDA…LAMI. Residues Thr-28 and Glu-33 each contribute to the Ca(2+) site. An N6-acetyllysine modification is found at Lys-40. Residue Lys-47 is modified to N6-acetyllysine; alternate. Lys-47 is modified (N6-succinyllysine; alternate). Residues Asp-61, Asn-63, Asp-65, and Glu-72 each contribute to the Ca(2+) site.

This sequence belongs to the S-100 family. In terms of assembly, homodimer; head to tail assembly of 2 subunits. Interacts with CACYBP in a calcium-dependent manner. Interacts with ANXA2 and ANXA11 (via N-terminus). Interacts with SUGT1. Interacts with TP53; has higher affinity for TP53 that is phosphorylated on its N-terminal domain, and lower affinity for TP53 that is phosphorylated on its C-terminal domain. Interacts with tropomyosin. Interacts with FKBP4. Interacts with PPP5C (via TPR repeats); the interaction is calcium-dependent and modulates PPP5C activity. Interacts with TPPP; this interaction inhibits TPPP dimerization.

The protein localises to the nucleus envelope. The protein resides in the cytoplasm. It is found in the cell membrane. May function as calcium sensor and modulator, contributing to cellular calcium signaling. May function by interacting with other proteins, such as TPR-containing proteins, and indirectly play a role in many physiological processes such as the reorganization of the actin cytoskeleton and in cell motility. Binds 2 calcium ions. Calcium binding is cooperative. This is Protein S100-A6 (S100A6) from Sus scrofa (Pig).